The sequence spans 213 residues: Guanylate kinase (213 aa).

The Guanylate kinase-like domain occupies 12-190 (GLCLVVAAPS…AIDQVRTILH (179 aa)). An ATP-binding site is contributed by 19-26 (APSGAGKS).

It belongs to the guanylate kinase family.

The protein resides in the cytoplasm. The catalysed reaction is GMP + ATP = GDP + ADP. In terms of biological role, essential for recycling GMP and indirectly, cGMP. This is Guanylate kinase from Granulibacter bethesdensis (strain ATCC BAA-1260 / CGDNIH1).